Here is a 363-residue protein sequence, read N- to C-terminus: Histidinol-phosphate aminotransferase (363 aa).

Lys220 carries the N6-(pyridoxal phosphate)lysine modification.

This sequence belongs to the class-II pyridoxal-phosphate-dependent aminotransferase family. Histidinol-phosphate aminotransferase subfamily. In terms of assembly, homodimer. Requires pyridoxal 5'-phosphate as cofactor.

It catalyses the reaction L-histidinol phosphate + 2-oxoglutarate = 3-(imidazol-4-yl)-2-oxopropyl phosphate + L-glutamate. It participates in amino-acid biosynthesis; L-histidine biosynthesis; L-histidine from 5-phospho-alpha-D-ribose 1-diphosphate: step 7/9. This Chlorobium chlorochromatii (strain CaD3) protein is Histidinol-phosphate aminotransferase.